Here is a 449-residue protein sequence, read N- to C-terminus: 23S rRNA (uracil(1939)-C(5))-methyltransferase RlmD (449 aa).

A TRAM domain is found at 12 to 70; it reads SKQLSAKQSFSVHQLDHLGAGIAQHQGKVVFIPGALPNETVQAQLTEQKKNYARAKLIK. [4Fe-4S] cluster-binding residues include Cys83, Cys89, Cys92, and Cys170. Residues Gln282, Phe311, Asn316, Glu332, Asp359, and Asp379 each coordinate S-adenosyl-L-methionine. Catalysis depends on Cys405, which acts as the Nucleophile.

Belongs to the class I-like SAM-binding methyltransferase superfamily. RNA M5U methyltransferase family. RlmD subfamily.

The catalysed reaction is uridine(1939) in 23S rRNA + S-adenosyl-L-methionine = 5-methyluridine(1939) in 23S rRNA + S-adenosyl-L-homocysteine + H(+). Its function is as follows. Catalyzes the formation of 5-methyl-uridine at position 1939 (m5U1939) in 23S rRNA. In Shewanella sp. (strain ANA-3), this protein is 23S rRNA (uracil(1939)-C(5))-methyltransferase RlmD.